We begin with the raw amino-acid sequence, 473 residues long: Histone-lysine N-methyltransferase SET5 (473 aa).

Positions Ala107–Val381 constitute an SET domain.

The protein belongs to the class V-like SAM-binding methyltransferase superfamily. Histone-lysine methyltransferase family. SET5 subfamily.

Its subcellular location is the nucleus. The protein resides in the chromosome. It is found in the cytoplasm. The enzyme catalyses L-lysyl-[histone] + S-adenosyl-L-methionine = N(6)-methyl-L-lysyl-[histone] + S-adenosyl-L-homocysteine + H(+). In terms of biological role, histone methyltransferase that monomethylates 'Lys-5', 'Lys-8' and 'Lys-12' of histone H4 (H4K5me1, H4K8me1 and H4K12me1, respectively), thereby controlling gene expression and remodeling chromatin structures. The sequence is that of Histone-lysine N-methyltransferase SET5 (SET5) from Candida albicans (strain SC5314 / ATCC MYA-2876) (Yeast).